Reading from the N-terminus, the 208-residue chain is 3-isopropylmalate dehydratase small subunit (208 aa).

Belongs to the LeuD family. LeuD type 1 subfamily. Heterodimer of LeuC and LeuD.

It carries out the reaction (2R,3S)-3-isopropylmalate = (2S)-2-isopropylmalate. The protein operates within amino-acid biosynthesis; L-leucine biosynthesis; L-leucine from 3-methyl-2-oxobutanoate: step 2/4. Its function is as follows. Catalyzes the isomerization between 2-isopropylmalate and 3-isopropylmalate, via the formation of 2-isopropylmaleate. This chain is 3-isopropylmalate dehydratase small subunit, found in Granulibacter bethesdensis (strain ATCC BAA-1260 / CGDNIH1).